The primary structure comprises 735 residues: Cyclic nucleotide-gated channel cone photoreceptor subunit alpha (735 aa).

At 1–214 the chain is on the cytoplasmic side; the sequence is MAKINTQHSY…PSSNMYYNWL (214 aa). Positions 142–191 are disordered; sequence VNFSNNTNEDKKEEKKEVKEEKKEEKKEEKKEEKKDDKKDDKKDDKKDDK. Residues 149-191 are compositionally biased toward basic and acidic residues; sequence NEDKKEEKKEVKEEKKEEKKEEKKEEKKDDKKDDKKDDKKDDK. The helical transmembrane segment at 215-236 threads the bilayer; sequence TIIAAPVFYNWCMLICRACFDE. The Extracellular portion of the chain corresponds to 237–246; it reads LQIDHIKLWL. Residues 247 to 267 traverse the membrane as a helical segment; sequence FLDYCSDIIYVFDMFVRFRTG. At 268-292 the chain is on the cytoplasmic side; that stretch reads FLEQGLLVKDEKKLRDHYTQTVQFK. Residues 293–311 traverse the membrane as a helical segment; sequence LDVLSLLPTDLAYLKLGLN. Over 312 to 316 the chain is Extracellular; the sequence is YPELR. Residues 317–335 traverse the membrane as a helical segment; sequence FNRLLRIARLFEFFDRTET. The Cytoplasmic segment spans residues 336–342; sequence RTNYPNM. The helical transmembrane segment at 343–366 threads the bilayer; that stretch reads FRIGNLVLYILIIIHWNACIYFAI. Topologically, residues 367–389 are extracellular; sequence SKVIGFGTDSWVYPNVSIPEYGR. The next 2 membrane-spanning stretches (helical) occupy residues 390 to 424 and 425 to 449; these read LSRK…LFVV and IDFL…SNMN. At 450-735 the chain is on the cytoplasmic side; sequence ASRAEFQAKV…PEKPEEQKKD (286 aa). 3',5'-cyclic GMP contacts are provided by residues 532-654, Glu-591, and Arg-606; that span reads LLIE…DNLI. The segment at 715–735 is disordered; sequence GSGSLSVGEPEPEKPEEQKKD. A compositionally biased stretch (basic and acidic residues) spans 725-735; sequence EPEKPEEQKKD.

Belongs to the cyclic nucleotide-gated cation channel (TC 1.A.1.5) family.

The protein resides in the membrane. Its function is as follows. Visual signal transduction is mediated by a G-protein coupled cascade using cGMP as second messenger. This protein can be activated by cyclic GMP which leads to an opening of the cation channel and thereby causing a depolarization of cone photoreceptors. The chain is Cyclic nucleotide-gated channel cone photoreceptor subunit alpha from Gallus gallus (Chicken).